The following is a 729-amino-acid chain: NAD(P)H-quinone oxidoreductase subunit 5, chloroplastic (729 aa).

A run of 18 helical transmembrane segments spans residues 9–29, 39–59, 87–107, 125–145, 147–167, 184–204, 218–238, 258–278, 289–311, 327–347, 354–374, 395–415, 425–445, 540–560, 592–612, 627–646, 676–696, and 708–728; these read WIIPLCPLIASCCTGSLSFFF, LCALLNVFSLAISMFVSLAIF, FLVDSLTLVMSLLVTTVGVLV, YAYLSLFTASMLGLVLSPNLI, LYVFWELVGMCSYLLVGFWFA, IGDFGLLLGILGIYWTTGSFE, IGFSNPILTNIIAFLLLAGPV, TPISALIHAATMVAAGIFFIA, LVMQASSWLGGATALLGATLALA, LGYMVLALGIGAYQSALFHLV, ALLFLGAGSVIHSIEKVVGYS, GTTFLLGTLSLSGIPPLACFW, WLSSLPLGILASGTAGLTAFY, FSLVMLAIPTTLVGLLGINLI, ILLNSRSSLILSFFGIFFSFI, LVGFTKLVSKFGLLVQSWSL, YGIDGFVNVIGALNFFGGEFI, and LFIIIFGAILSSVLIFIFLPF.

The protein belongs to the complex I subunit 5 family. In terms of assembly, NDH is composed of at least 16 different subunits, 5 of which are encoded in the nucleus.

The protein resides in the plastid. It localises to the chloroplast thylakoid membrane. It carries out the reaction a plastoquinone + NADH + (n+1) H(+)(in) = a plastoquinol + NAD(+) + n H(+)(out). The catalysed reaction is a plastoquinone + NADPH + (n+1) H(+)(in) = a plastoquinol + NADP(+) + n H(+)(out). Its function is as follows. NDH shuttles electrons from NAD(P)H:plastoquinone, via FMN and iron-sulfur (Fe-S) centers, to quinones in the photosynthetic chain and possibly in a chloroplast respiratory chain. The immediate electron acceptor for the enzyme in this species is believed to be plastoquinone. Couples the redox reaction to proton translocation, and thus conserves the redox energy in a proton gradient. The protein is NAD(P)H-quinone oxidoreductase subunit 5, chloroplastic (ndhF) of Adiantum capillus-veneris (Maidenhair fern).